A 404-amino-acid polypeptide reads, in one-letter code: Probable tRNA sulfurtransferase (404 aa).

One can recognise a THUMP domain in the interval 60–165; it reads HEVAESLKEI…DEAAYISYED (106 aa). ATP-binding positions include 183 to 184, 208 to 209, Arg-265, Gly-287, and Gln-296; these read ML and HF.

Belongs to the ThiI family.

It localises to the cytoplasm. It catalyses the reaction [ThiI sulfur-carrier protein]-S-sulfanyl-L-cysteine + a uridine in tRNA + 2 reduced [2Fe-2S]-[ferredoxin] + ATP + H(+) = [ThiI sulfur-carrier protein]-L-cysteine + a 4-thiouridine in tRNA + 2 oxidized [2Fe-2S]-[ferredoxin] + AMP + diphosphate. The enzyme catalyses [ThiS sulfur-carrier protein]-C-terminal Gly-Gly-AMP + S-sulfanyl-L-cysteinyl-[cysteine desulfurase] + AH2 = [ThiS sulfur-carrier protein]-C-terminal-Gly-aminoethanethioate + L-cysteinyl-[cysteine desulfurase] + A + AMP + 2 H(+). The protein operates within cofactor biosynthesis; thiamine diphosphate biosynthesis. Its function is as follows. Catalyzes the ATP-dependent transfer of a sulfur to tRNA to produce 4-thiouridine in position 8 of tRNAs, which functions as a near-UV photosensor. Also catalyzes the transfer of sulfur to the sulfur carrier protein ThiS, forming ThiS-thiocarboxylate. This is a step in the synthesis of thiazole, in the thiamine biosynthesis pathway. The sulfur is donated as persulfide by IscS. The polypeptide is Probable tRNA sulfurtransferase (Streptococcus agalactiae serotype V (strain ATCC BAA-611 / 2603 V/R)).